The following is a 26-amino-acid chain: MGTTTMGVKLDDATRERIKSAASRID.

The interval 1 to 26 is disordered; sequence MGTTTMGVKLDDATRERIKSAASRID. Basic and acidic residues predominate over residues 9-26; it reads KLDDATRERIKSAASRID.

FAD is required as a cofactor.

It catalyses the reaction L-proline + a quinone = (S)-1-pyrroline-5-carboxylate + a quinol + H(+). It carries out the reaction L-glutamate 5-semialdehyde + NAD(+) + H2O = L-glutamate + NADH + 2 H(+). It participates in amino-acid degradation; L-proline degradation into L-glutamate; L-glutamate from L-proline: step 1/2. It functions in the pathway amino-acid degradation; L-proline degradation into L-glutamate; L-glutamate from L-proline: step 2/2. Its function is as follows. Oxidizes proline to glutamate for use as a carbon and nitrogen source and also function as a transcriptional repressor of the put operon. The sequence is that of Bifunctional protein PutA (putA) from Klebsiella pneumoniae.